The sequence spans 91 residues: Potassium channel toxin MeuTXK-beta-2 (91 aa).

An N-terminal signal peptide occupies residues 1 to 19 (MQRNLVVLLFLGMVALSSC). Positions 54 to 91 (QFGCSAYQGYCDDHCQDIEKKEGFCHGFKCKCGIPMGF) constitute a BetaSPN-type CS-alpha/beta domain. Cystine bridges form between cysteine 57/cysteine 78, cysteine 64/cysteine 83, and cysteine 68/cysteine 85.

It belongs to the long chain scorpion toxin family. Class 1 subfamily. Expressed by the venom gland.

The protein resides in the secreted. Has a low affinity binding to potassium channels of rat brain synaptosomes. Displays weak antibacterial activity against Stenotrophomonas sp. Strongly inhibits the development of the Plasmodium berghei ookinetes. Displays slight hemolytic effect on mouse erythrocytes. Induces cytolysis on Xenopus oocytes at high concentrations. Is not toxic towards mice and towards the insect Tenebrio molitor. This is Potassium channel toxin MeuTXK-beta-2 from Mesobuthus eupeus (Lesser Asian scorpion).